The sequence spans 122 residues: Large ribosomal subunit protein uL14 (122 aa).

This sequence belongs to the universal ribosomal protein uL14 family. In terms of assembly, part of the 50S ribosomal subunit. Forms a cluster with proteins L3 and L19. In the 70S ribosome, L14 and L19 interact and together make contacts with the 16S rRNA in bridges B5 and B8.

Binds to 23S rRNA. Forms part of two intersubunit bridges in the 70S ribosome. The polypeptide is Large ribosomal subunit protein uL14 (Nautilia profundicola (strain ATCC BAA-1463 / DSM 18972 / AmH)).